Here is a 438-residue protein sequence, read N- to C-terminus: Protein kinase PINOID (438 aa).

Residues 1–24 (MLRESDGEMSLGTTNSPISSGTES) form a disordered region. A compositionally biased stretch (polar residues) spans 11 to 24 (LGTTNSPISSGTES). The Protein kinase domain maps to 75 to 394 (FRLMRRIGAG…AAEVKVHPFF (320 aa)). ATP is bound by residues 81–89 (IGAGDIGTV) and K109. D205 (proton acceptor) is an active-site residue. The AGC-kinase C-terminal domain occupies 395-438 (KGLNFALIRTLTPPEIPSSVVKKPMKSATFSGRSSNKPAAFDYF).

Belongs to the protein kinase superfamily. Ser/Thr protein kinase family. As to quaternary structure, interacts with PDK1, CML12 and PBP1. Component of a complex made of PINs (e.g. PIN1 and PIN2), MAB4/MELs (e.g. NPY1/MAB4 and NPY5/MEL1) and AGC kinases (e.g. D6PK and PID) at the plasma membrane. Binds directly to PIN2, NPY1/MAB4 and NPY5/MEL1. In terms of processing, autophosphorylated. Phosphorylated by PDK1. Expressed in root hair cells, shoot xylem parenchyma cells and endodermis around the vasculature. Expressed in anther primordia, vasculature of the growing flower stalk, young pedicels and bracts and developing sepals, but not in petals. In pistils, transiently expressed in the vasculature of the style and the septum, and in the integuments and funiculus of the developing ovule.

It localises to the cytoplasm. It is found in the cytosol. Its subcellular location is the cell membrane. It carries out the reaction L-seryl-[protein] + ATP = O-phospho-L-seryl-[protein] + ADP + H(+). The catalysed reaction is L-threonyl-[protein] + ATP = O-phospho-L-threonyl-[protein] + ADP + H(+). Activated by magnesium and PDK1. Inhibited by staurosporine. Repressed by calcium. Its function is as follows. Serine/threonine-protein kinase involved in the regulation of auxin signaling. Acts as a positive regulator of cellular auxin efflux and regulates organ development by enhancing polar auxin transport. Phosphorylates conserved serine residues in the PIN auxin efflux carriers. Phosphorylation of PIN proteins is required and sufficient for apical-basal PIN polarity that enables directional intercellular auxin fluxes, which mediate differential growth, tissue patterning and organogenesis. Phosphorylates PIN proteins (e.g. PIN1 and PIN2), especially when NPY proteins (e.g. NPY1/MAB4 and NPY5/MEL1) are recruited at the plasma membrane; this enhances the polarized localizations (apical or basal) of PINs in the cell by limiting their lateral diffusion-based escape. Acts in association with PIN1 to control the establishment of bilateral symmetry and promotion of cotyledon outgrowth. Regulates root gravitropism through modulation of PIN2-dependent basipetal auxin transport. Required for polarization of PIN3-dependent auxin transport for hypocotyl gravitropic response. The protein kinase activity of PID is essential for its auxin efflux regulatory function. PID kinase and PP2A phosphatase activities antagonistically regulate phosphorylation of PIN proteins, affecting PIN sorting. The protein is Protein kinase PINOID of Arabidopsis thaliana (Mouse-ear cress).